The sequence spans 279 residues: Shikimate dehydrogenase (NADP(+)) (279 aa).

Shikimate-binding positions include 17 to 19 and threonine 64; that span reads SLS. Lysine 68 serves as the catalytic Proton acceptor. Residue aspartate 80 participates in NADP(+) binding. Residues asparagine 89 and aspartate 105 each contribute to the shikimate site. NADP(+)-binding positions include 129–133, 153–158, and leucine 221; these read GAGGS and NRTAKK. A shikimate-binding site is contributed by tyrosine 223. Glycine 245 is a binding site for NADP(+).

The protein belongs to the shikimate dehydrogenase family. As to quaternary structure, homodimer.

It carries out the reaction shikimate + NADP(+) = 3-dehydroshikimate + NADPH + H(+). Its pathway is metabolic intermediate biosynthesis; chorismate biosynthesis; chorismate from D-erythrose 4-phosphate and phosphoenolpyruvate: step 4/7. Its function is as follows. Involved in the biosynthesis of the chorismate, which leads to the biosynthesis of aromatic amino acids. Catalyzes the reversible NADPH linked reduction of 3-dehydroshikimate (DHSA) to yield shikimate (SA). This Idiomarina loihiensis (strain ATCC BAA-735 / DSM 15497 / L2-TR) protein is Shikimate dehydrogenase (NADP(+)).